We begin with the raw amino-acid sequence, 437 residues long: 3-phosphoshikimate 1-carboxyvinyltransferase (437 aa).

3 residues coordinate 3-phosphoshikimate: Lys22, Ser23, and Arg27. Lys22 is a phosphoenolpyruvate binding site. Residues Gly94 and Arg122 each coordinate phosphoenolpyruvate. Ser167, Gln169, Asp314, and Lys341 together coordinate 3-phosphoshikimate. Phosphoenolpyruvate is bound at residue Gln169. Asp314 acts as the Proton acceptor in catalysis. Residues Arg345 and Arg389 each contribute to the phosphoenolpyruvate site.

It belongs to the EPSP synthase family. In terms of assembly, monomer.

Its subcellular location is the cytoplasm. The catalysed reaction is 3-phosphoshikimate + phosphoenolpyruvate = 5-O-(1-carboxyvinyl)-3-phosphoshikimate + phosphate. It participates in metabolic intermediate biosynthesis; chorismate biosynthesis; chorismate from D-erythrose 4-phosphate and phosphoenolpyruvate: step 6/7. Catalyzes the transfer of the enolpyruvyl moiety of phosphoenolpyruvate (PEP) to the 5-hydroxyl of shikimate-3-phosphate (S3P) to produce enolpyruvyl shikimate-3-phosphate and inorganic phosphate. The protein is 3-phosphoshikimate 1-carboxyvinyltransferase of Oenococcus oeni (strain ATCC BAA-331 / PSU-1).